We begin with the raw amino-acid sequence, 120 residues long: Protein RALF-like 1 (120 aa).

The first 26 residues, 1–26 (MDKSFTLFLTLTILVVFIISSPPVQA), serve as a signal peptide directing secretion. Residues 27–71 (GFANDLGGVAWATTGDNGSGCHGSIAECIGAEEEEMDSEINRRIL) constitute a propeptide, removed in mature form. N43 is a glycosylation site (N-linked (GlcNAc...) asparagine). Cystine bridges form between C89–C99 and C112–C118.

Belongs to the plant rapid alkalinization factor (RALF) family. In terms of assembly, interacts with FER and promotes its phosphorylation and subsequent activation. Post-translationally, proteolytically cleaved, probably by S1P, a subtilisin-like serine protease (subtilase). Expressed in roots and stems.

It is found in the secreted. Its function is as follows. Cell signaling peptide that may regulate plant stress, growth, and development. Mediates a rapid alkalinization of extracellular space by mediating a transient increase in the cytoplasmic Ca(2+) concentration leading to a calcium-dependent signaling events through a cell surface receptor and a concomitant activation of some intracellular mitogen-activated protein kinases. Mostly active in roots. Prevents plant growth (e.g. root and leaf length). Suppresses cell elongation of the primary root by activating the cell surface receptor FER and triggering phosphorylation of AHA2 and subsequent extracellular alkalinization. This is Protein RALF-like 1 (RALF1) from Arabidopsis thaliana (Mouse-ear cress).